We begin with the raw amino-acid sequence, 379 residues long: GDSL esterase/lipase EXL2 (379 aa).

An N-terminal signal peptide occupies residues 1 to 35 (MKRNSINIHHVTSFSSSPFWCVFFLVLLCKTSTNA). Asn-42 carries an N-linked (GlcNAc...) asparagine glycan. The Nucleophile role is filled by Ser-54. Catalysis depends on residues Asp-358 and His-361.

This sequence belongs to the 'GDSL' lipolytic enzyme family.

The protein localises to the secreted. This is GDSL esterase/lipase EXL2 (EXL2) from Arabidopsis thaliana (Mouse-ear cress).